Consider the following 143-residue polypeptide: Hemoglobin subunit alpha-1 (143 aa).

Ser-2 is subject to N-acetylserine. One can recognise a Globin domain in the interval 2 to 143; the sequence is SLTAKDKDTV…LSRALAEKYR (142 aa). His-60 provides a ligand contact to O2. His-89 serves as a coordination point for heme b.

This sequence belongs to the globin family. In terms of assembly, hb1 is a heterotetramer of two alpha-1 chains and two beta-1 chains. As to expression, red blood cells.

Involved in oxygen transport from gills to the various peripheral tissues. This chain is Hemoglobin subunit alpha-1 (hba1), found in Anarhichas minor (Arctic spotted wolffish).